The sequence spans 313 residues: Protoheme IX farnesyltransferase (313 aa).

Transmembrane regions (helical) follow at residues 32–52, 53–73, 120–140, 153–173, 180–200, 226–246, 248–268, and 284–304; these read VMSLVVFTALVGMLLAPGDFH, PVLAVTAMLCIAVGGGAAGAL, VLVNWIAAALLAFTIFFYVVI, IVIGGAAGALPPVVAWAAVTG, LLLFAIIFFWTPPHFWALALF, ILLYTIVLVAVAAAPWPLGYF, AVYGIASLALGGWMLVLAIRV, and LFKFSILYLFALFSILLIEVV.

This sequence belongs to the UbiA prenyltransferase family. Protoheme IX farnesyltransferase subfamily.

It is found in the cell inner membrane. It catalyses the reaction heme b + (2E,6E)-farnesyl diphosphate + H2O = Fe(II)-heme o + diphosphate. Its pathway is porphyrin-containing compound metabolism; heme O biosynthesis; heme O from protoheme: step 1/1. Functionally, converts heme B (protoheme IX) to heme O by substitution of the vinyl group on carbon 2 of heme B porphyrin ring with a hydroxyethyl farnesyl side group. The chain is Protoheme IX farnesyltransferase from Rhodopseudomonas palustris (strain BisB5).